The sequence spans 464 residues: Protein FAM90A23 (464 aa).

Disordered regions lie at residues 1–42, 69–389, and 415–437; these read MMAR…DPRL, VPAT…HDGA, and HSPEKPGAFLAQSPHVSEKSEAP. Basic and acidic residues-rich tracts occupy residues 74–89 and 97–114; these read GKKEGKENLKPWKPRA and NKDKGEKEERPRQQDPQR. Residues 180–197 show a composition bias toward low complexity; the sequence is LASLSPLRKASLSSSSSL.

The protein belongs to the FAM90 family.

The sequence is that of Protein FAM90A23 from Homo sapiens (Human).